A 225-amino-acid polypeptide reads, in one-letter code: Platelet-activating factor acetylhydrolase IB subunit beta homolog (225 aa).

The protein belongs to the 'GDSL' lipolytic enzyme family. Platelet-activating factor acetylhydrolase IB beta/gamma subunits subfamily. As to quaternary structure, does not interact with Lis-1.

The polypeptide is Platelet-activating factor acetylhydrolase IB subunit beta homolog (Paf-AHalpha) (Drosophila melanogaster (Fruit fly)).